A 744-amino-acid polypeptide reads, in one-letter code: Elongation factor G, mitochondrial (744 aa).

A mitochondrion-targeting transit peptide spans 1–25 (MTISCLLRIRPALAKSFFENGQRAF). The 278-residue stretch at 38–315 (ERIRNIGISA…AVLDYLPNPG (278 aa)) folds into the tr-type G domain. Residues 47 to 54 (AHIDSGKT), 114 to 118 (DTPGH), and 168 to 171 (NKLD) each bind GTP.

Belongs to the TRAFAC class translation factor GTPase superfamily. Classic translation factor GTPase family. EF-G/EF-2 subfamily.

It localises to the mitochondrion. Its pathway is protein biosynthesis; polypeptide chain elongation. Mitochondrial GTPase that catalyzes the GTP-dependent ribosomal translocation step during translation elongation. During this step, the ribosome changes from the pre-translocational (PRE) to the post-translocational (POST) state as the newly formed A-site-bound peptidyl-tRNA and P-site-bound deacylated tRNA move to the P and E sites, respectively. Catalyzes the coordinated movement of the two tRNA molecules, the mRNA and conformational changes in the ribosome. This is Elongation factor G, mitochondrial from Culex quinquefasciatus (Southern house mosquito).